Reading from the N-terminus, the 229-residue chain is UPF0758 protein Mbar_A2303 (229 aa).

In terms of domain architecture, MPN spans 106–228 (KVCSPKDVYT…YVSLKDEGFV (123 aa)). H177, H179, and D190 together coordinate Zn(2+). The JAMM motif motif lies at 177–190 (HNHPSGDPSPSRED).

Belongs to the UPF0758 family.

The sequence is that of UPF0758 protein Mbar_A2303 from Methanosarcina barkeri (strain Fusaro / DSM 804).